Reading from the N-terminus, the 290-residue chain is Inositol monophosphatase 2 (290 aa).

Mg(2+)-binding residues include Glu-83, Asp-103, Ile-105, and Asp-106. Glu-83 serves as a coordination point for substrate. Substrate is bound by residues 105–108, 207–209, Gln-226, and Asp-233; these read IDGT and GSS. Asp-233 contributes to the Mg(2+) binding site.

It belongs to the inositol monophosphatase superfamily. Homodimer. The cofactor is Mg(2+). Mostly expressed in brain, small intestine, heart, kidney, and spleen (at protein level).

The protein localises to the cytoplasm. It catalyses the reaction a myo-inositol phosphate + H2O = myo-inositol + phosphate. It carries out the reaction 1D-myo-inositol 1-phosphate + H2O = myo-inositol + phosphate. The enzyme catalyses 1D-myo-inositol 2-phosphate + H2O = myo-inositol + phosphate. The catalysed reaction is 1D-myo-inositol 3-phosphate + H2O = myo-inositol + phosphate. It catalyses the reaction 1D-myo-inositol 4-phosphate + H2O = myo-inositol + phosphate. It carries out the reaction 1D-myo-inositol 5-phosphate + H2O = myo-inositol + phosphate. The enzyme catalyses 1D-myo-inositol 6-phosphate + H2O = myo-inositol + phosphate. The catalysed reaction is alpha-D-glucose 1-phosphate + H2O = D-glucose + phosphate. It catalyses the reaction glycerol 2-phosphate + H2O = glycerol + phosphate. It carries out the reaction adenosine 2'-phosphate + H2O = adenosine + phosphate. Its pathway is polyol metabolism; myo-inositol biosynthesis; myo-inositol from D-glucose 6-phosphate: step 2/2. Its function is as follows. Phosphatase that can use myo-inositol monophosphates, myo-inositol 1,4-diphosphate, scyllo-inositol-1,4-diphosphate, glucose-1-phosphate, beta-glycerophosphate and 2'-AMP as substrates in vitro. No physiological substrates has been described yet. Has been implicated as the pharmacological target for lithium Li(+) action in brain. This chain is Inositol monophosphatase 2, found in Mus musculus (Mouse).